The sequence spans 762 residues: Proline-rich receptor-like protein kinase PERK10 (762 aa).

The disordered stretch occupies residues 1-322 (MTTPAQAPRE…PTPVTDNSSS (322 aa)). Residues 1–328 (MTTPAQAPRE…NSSSSGISIA (328 aa)) are Extracellular-facing. The segment covering 13–23 (SLSPSLASPPL) has biased composition (low complexity). N37 is a glycosylation site (N-linked (GlcNAc...) asparagine). The span at 41 to 57 (PTREPTNGNPPETTNTP) shows a compositional bias: low complexity. Pro residues-rich tracts occupy residues 60–210 (SSPP…PSTP), 231–246 (PPPP…PPSP), and 254–275 (HPSP…PDPL). Over residues 276-305 (PSNSSSPPTLLPPSSVVSPPSPPRKSVSGP) the composition is skewed to low complexity. 2 N-linked (GlcNAc...) asparagine glycosylation sites follow: N278 and N319. A helical transmembrane segment spans residues 329-349 (AVVGVSIGVALVLLTLIGVVV). Residues 350-762 (CCLKKRKKRL…NSYISKDENL (413 aa)) lie on the Cytoplasmic side of the membrane. Residues 370–410 (TPMESSSPRSDSALLKTQSSAPLVGNRSSNRTYLSQSEPGG) are disordered. Positions 372 to 407 (MESSSPRSDSALLKTQSSAPLVGNRSSNRTYLSQSE) are enriched in polar residues. The Protein kinase domain occupies 430–706 (FSDENLLGEG…SQIVRAFDSL (277 aa)). ATP-binding positions include 436-444 (LGEGGFGRV) and K458. Catalysis depends on D554, which acts as the Proton acceptor.

The protein belongs to the protein kinase superfamily. Ser/Thr protein kinase family. In terms of assembly, interacts with KIPK1 and KIPK2 (via its cytosolic domain). Mostly expressed in inflorescence bolts and flower buds, and, to a lower extent, in roots, seedlings, leaves and siliques.

The protein localises to the cell membrane. The enzyme catalyses L-seryl-[protein] + ATP = O-phospho-L-seryl-[protein] + ADP + H(+). It catalyses the reaction L-threonyl-[protein] + ATP = O-phospho-L-threonyl-[protein] + ADP + H(+). Its function is as follows. Could be involved in the negative regulation of root growth. The chain is Proline-rich receptor-like protein kinase PERK10 (PERK10) from Arabidopsis thaliana (Mouse-ear cress).